The following is a 436-amino-acid chain: MEKQILVPSPTDELVNRALEVKSASVSLSQCSNDQRQSALILMTEALSLRSSEILKANSDDVHRAEQEGLNQALLSRLKLTEEKLRISIEGIRQVASLSDPIGIRQLHRELNTNLYLQRVTVPLGVIGVIFESRPDAVMQIASLAIRSGNGAILKGGSEASLTNIEIVKAMKEGLSKSDIQPESICLLKTRQESLGLLGLDGIVDLIIPRGSNELVRFIQDNTRIPVLGHADGICHLYIDSAVNLNQALDIAIDSKCQYPAACNAIETLLLHKDIAASFLKLAIPAFEKLGVTLLGDELSQSFGIITKAEESDWSTEYLDLKLSVKVVSSVDEAMLHIRRYGSRHTDAIATTNKEIARRFLRTVDSSGVYHNCSTRFADGFRYGFGAEVGISTQTLPPRGPVGLDGLVTYRYFLEGDGHIAEDFSNGKKTFSHIDL.

It belongs to the gamma-glutamyl phosphate reductase family.

It is found in the cytoplasm. It carries out the reaction L-glutamate 5-semialdehyde + phosphate + NADP(+) = L-glutamyl 5-phosphate + NADPH + H(+). It functions in the pathway amino-acid biosynthesis; L-proline biosynthesis; L-glutamate 5-semialdehyde from L-glutamate: step 2/2. Catalyzes the NADPH-dependent reduction of L-glutamate 5-phosphate into L-glutamate 5-semialdehyde and phosphate. The product spontaneously undergoes cyclization to form 1-pyrroline-5-carboxylate. The chain is Gamma-glutamyl phosphate reductase from Prochlorococcus marinus (strain SARG / CCMP1375 / SS120).